The primary structure comprises 231 residues: Cytochrome c oxidase subunit 2 (231 aa).

Residues 1-30 (MNNFFQGYNLLFQHSLFASYMDWFHAFNCS) lie on the Mitochondrial intermembrane side of the membrane. A helical membrane pass occupies residues 31–51 (LLLGVLVFVTLLFGYLIFSTF). The Mitochondrial matrix portion of the chain corresponds to 52–64 (YFKSKKIEYQFGE). Residues 65 to 85 (LLCSIFPTIILLMQMVPSLSL) form a helical membrane-spanning segment. At 86–231 (LYYYGLMNLD…FKSWCFGTME (146 aa)) the chain is on the mitochondrial intermembrane side. The Cu cation site is built by His164, Cys199, Glu201, Cys203, His207, and Met210. Residue Glu201 participates in Mg(2+) binding.

The protein belongs to the cytochrome c oxidase subunit 2 family. Component of the cytochrome c oxidase (complex IV, CIV), a multisubunit enzyme composed of a catalytic core of 3 subunits and several supernumerary subunits. The complex exists as a monomer or a dimer and forms supercomplexes (SCs) in the inner mitochondrial membrane with ubiquinol-cytochrome c oxidoreductase (cytochrome b-c1 complex, complex III, CIII). Cu cation serves as cofactor.

The protein localises to the mitochondrion inner membrane. It carries out the reaction 4 Fe(II)-[cytochrome c] + O2 + 8 H(+)(in) = 4 Fe(III)-[cytochrome c] + 2 H2O + 4 H(+)(out). Component of the cytochrome c oxidase, the last enzyme in the mitochondrial electron transport chain which drives oxidative phosphorylation. The respiratory chain contains 3 multisubunit complexes succinate dehydrogenase (complex II, CII), ubiquinol-cytochrome c oxidoreductase (cytochrome b-c1 complex, complex III, CIII) and cytochrome c oxidase (complex IV, CIV), that cooperate to transfer electrons derived from NADH and succinate to molecular oxygen, creating an electrochemical gradient over the inner membrane that drives transmembrane transport and the ATP synthase. Cytochrome c oxidase is the component of the respiratory chain that catalyzes the reduction of oxygen to water. Electrons originating from reduced cytochrome c in the intermembrane space (IMS) are transferred via the dinuclear copper A center (CU(A)) of subunit 2 and heme A of subunit 1 to the active site in subunit 1, a binuclear center (BNC) formed by heme A3 and copper B (CU(B)). The BNC reduces molecular oxygen to 2 water molecules using 4 electrons from cytochrome c in the IMS and 4 protons from the mitochondrial matrix. The protein is Cytochrome c oxidase subunit 2 (cox-2) of Caenorhabditis briggsae.